A 525-amino-acid chain; its full sequence is Light-independent protochlorophyllide reductase subunit B (525 aa).

Position 36 (aspartate 36) interacts with [4Fe-4S] cluster. Residue aspartate 274 is the Proton donor of the active site. A substrate-binding site is contributed by 409–410 (GL). Residues 433–464 (HGGKAVAREESPVAPADLAPAATSDTPAAPSP) form a disordered region. The segment covering 444–464 (PVAPADLAPAATSDTPAAPSP) has biased composition (low complexity).

This sequence belongs to the ChlB/BchB/BchZ family. Protochlorophyllide reductase is composed of three subunits; BchL, BchN and BchB. Forms a heterotetramer of two BchB and two BchN subunits. [4Fe-4S] cluster serves as cofactor.

The catalysed reaction is chlorophyllide a + oxidized 2[4Fe-4S]-[ferredoxin] + 2 ADP + 2 phosphate = protochlorophyllide a + reduced 2[4Fe-4S]-[ferredoxin] + 2 ATP + 2 H2O. The protein operates within porphyrin-containing compound metabolism; bacteriochlorophyll biosynthesis (light-independent). Component of the dark-operative protochlorophyllide reductase (DPOR) that uses Mg-ATP and reduced ferredoxin to reduce ring D of protochlorophyllide (Pchlide) to form chlorophyllide a (Chlide). This reaction is light-independent. The NB-protein (BchN-BchB) is the catalytic component of the complex. The chain is Light-independent protochlorophyllide reductase subunit B from Rhodobacter capsulatus (strain ATCC BAA-309 / NBRC 16581 / SB1003).